We begin with the raw amino-acid sequence, 192 residues long: Elongation factor P (192 aa).

Belongs to the elongation factor P family.

The protein resides in the cytoplasm. It participates in protein biosynthesis; polypeptide chain elongation. Functionally, involved in peptide bond synthesis. Stimulates efficient translation and peptide-bond synthesis on native or reconstituted 70S ribosomes in vitro. Probably functions indirectly by altering the affinity of the ribosome for aminoacyl-tRNA, thus increasing their reactivity as acceptors for peptidyl transferase. The polypeptide is Elongation factor P (Borrelia hermsii (strain HS1 / DAH)).